The primary structure comprises 422 residues: Inner membrane ALBINO3-like protein 2, chloroplastic (422 aa).

Over residues 1 to 10 (MALQMKQSPS) the composition is skewed to polar residues. A disordered region spans residues 1 to 22 (MALQMKQSPSMGVRRASQPVLP). The helical transmembrane segment at 65-85 (LYTLAEGGPIDVLAQFFEFVL) threads the bilayer. Residues 86-96 (QTLDEGLESAK) lie on the Stromal side of the membrane. A helical membrane pass occupies residues 97–117 (IPYSYGFAIIALTVLVKVATF). Residues 118–166 (PLTQKQVESTLSLQALQPRVKELQAKYADDPENLQLETARLYKEAGVNP) lie on the Lumenal side of the membrane. The chain crosses the membrane as a helical span at residues 167–187 (LAGCFPTLATIPVFIGLYNAL). Residues 188–225 (SNAAKEGLLTEGFFWIPSLGGPTTIGGGLEWLVPFENG) are Stromal-facing. Residues 226–246 (APPVGWANAAAYLVMPVLLVA) traverse the membrane as a helical segment. Over 247–275 (SQYASQKIISSQNNQDPSQQQAQAILKFL) the chain is Lumenal. The chain crosses the membrane as a helical span at residues 276–296 (PLMIGWFSLNVPSGLTLYWFV). Residues 297–422 (NNLLSTGQQL…GSEEGKDNSA (126 aa)) are Stromal-facing. The interval 325–422 (TAGSSTPIVK…GSEEGKDNSA (98 aa)) is disordered. Residues 334 to 350 (KPKEERVKKVTGKELGS) are compositionally biased toward basic and acidic residues. The span at 358-367 (DGEEVEDVEV) shows a compositional bias: acidic residues. Residues 368–380 (EVVSSGSSSSSGS) show a composition bias toward low complexity. A compositionally biased stretch (basic and acidic residues) spans 386–400 (RKGEKFRALKAREAA).

Belongs to the OXA1/ALB3/YidC (TC 2.A.9.2) family.

The protein localises to the plastid. The protein resides in the chloroplast thylakoid membrane. Functionally, required for the insertion of some light-harvesting complexes (LHC) proteins into the chloroplast thylakoid membrane. Essential for the assembly and activity of LHC I and II. Its function is probably partly distinct from that of ALB3.1. The polypeptide is Inner membrane ALBINO3-like protein 2, chloroplastic (ALB3.2) (Chlamydomonas reinhardtii (Chlamydomonas smithii)).